A 109-amino-acid polypeptide reads, in one-letter code: Flagellar transcriptional regulator FlhD (109 aa).

It belongs to the FlhD family. As to quaternary structure, homodimer; disulfide-linked. Forms a heterohexamer composed of two FlhC and four FlhD subunits. Each FlhC binds a FlhD dimer, forming a heterotrimer, and a hexamer assembles by dimerization of two heterotrimers.

It localises to the cytoplasm. Functionally, functions in complex with FlhC as a master transcriptional regulator that regulates transcription of several flagellar and non-flagellar operons by binding to their promoter region. Activates expression of class 2 flagellar genes, including fliA, which is a flagellum-specific sigma factor that turns on the class 3 genes. Also regulates genes whose products function in a variety of physiological pathways. The chain is Flagellar transcriptional regulator FlhD from Acidovorax sp. (strain JS42).